Reading from the N-terminus, the 179-residue chain is Pyridoxal 5'-phosphate synthase subunit PdxT (179 aa).

Residue 48–50 (GES) coordinates L-glutamine. Cysteine 79 serves as the catalytic Nucleophile. Residues arginine 101 and 127-128 (IR) each bind L-glutamine. Active-site charge relay system residues include histidine 163 and glutamate 165.

Belongs to the glutaminase PdxT/SNO family. As to quaternary structure, in the presence of PdxS, forms a dodecamer of heterodimers. Only shows activity in the heterodimer.

It carries out the reaction aldehydo-D-ribose 5-phosphate + D-glyceraldehyde 3-phosphate + L-glutamine = pyridoxal 5'-phosphate + L-glutamate + phosphate + 3 H2O + H(+). It catalyses the reaction L-glutamine + H2O = L-glutamate + NH4(+). Its pathway is cofactor biosynthesis; pyridoxal 5'-phosphate biosynthesis. Catalyzes the hydrolysis of glutamine to glutamate and ammonia as part of the biosynthesis of pyridoxal 5'-phosphate. The resulting ammonia molecule is channeled to the active site of PdxS. The polypeptide is Pyridoxal 5'-phosphate synthase subunit PdxT (Francisella tularensis subsp. holarctica (strain FTNF002-00 / FTA)).